The following is an 875-amino-acid chain: Alanine--tRNA ligase (875 aa).

His-564, His-568, Cys-666, and His-670 together coordinate Zn(2+).

Belongs to the class-II aminoacyl-tRNA synthetase family. Homotetramer. Zn(2+) serves as cofactor.

Its subcellular location is the cytoplasm. The catalysed reaction is tRNA(Ala) + L-alanine + ATP = L-alanyl-tRNA(Ala) + AMP + diphosphate. Catalyzes the attachment of alanine to tRNA(Ala) in a two-step reaction: alanine is first activated by ATP to form Ala-AMP and then transferred to the acceptor end of tRNA(Ala). Also edits incorrectly charged Ser-tRNA(Ala) and Gly-tRNA(Ala) via its editing domain. In Yersinia pestis bv. Antiqua (strain Angola), this protein is Alanine--tRNA ligase.